Reading from the N-terminus, the 521-residue chain is Amidase (521 aa).

Catalysis depends on charge relay system residues K96 and S171. A disordered region spans residues 155-174; that stretch reads SGPVRNPWDRQREAGGSSGG. S195 (acyl-ester intermediate) is an active-site residue.

It belongs to the amidase family. Homodimer.

It catalyses the reaction a monocarboxylic acid amide + H2O = a monocarboxylate + NH4(+). Hydrolyzes propionamides efficiently, and also at a lower efficiency, acetamide, acrylamide and indoleacetamide. This enzyme seems to be stereospecific and can lead to the production of a single enantiomer. This chain is Amidase (amdA), found in Rhodococcus erythropolis (Arthrobacter picolinophilus).